The sequence spans 668 residues: GTP-binding protein 1 (668 aa).

The tract at residues 1–32 (MAAERSRSPVDSPVPASMFAPEPSSPGAARAA) is disordered. A phosphoserine mark is found at Ser-6, Ser-8, Ser-12, Ser-24, Ser-25, Ser-44, Ser-47, and Ser-69. One can recognise a tr-type G domain in the interval 158 to 389 (FLEVRVAVVG…LNLLSPRTSY (232 aa)). The segment at 167 to 174 (GNVDAGKS) is G1. Residue 167–174 (GNVDAGKS) participates in GTP binding. A G2 region spans residues 206 to 210 (GRTSS). Residues 252-255 (DLAG) form a G3 region. GTP is bound by residues 252–256 (DLAGH) and 308–311 (TKID). A G4 region spans residues 308–311 (TKID). Residues 366–368 (SNV) form a G5 region. A compositionally biased stretch (polar residues) spans 573-595 (LLQTTNNSPMNSKPQQIKMQSTK). Residues 573–668 (LLQTTNNSPM…GACVTPASGC (96 aa)) are disordered. Residue Ser-580 is modified to Phosphoserine. The span at 609-619 (GVPAAGGPPTG) shows a compositional bias: low complexity. A compositionally biased stretch (polar residues) spans 624-637 (SLGTAQAASTSGLQ). Positions 646–657 (GRRRGGQRHKVK) are enriched in basic residues.

It belongs to the TRAFAC class translation factor GTPase superfamily. Classic translation factor GTPase family. GTPBP1 subfamily. Interacts with EXOSC2/RRP4, EXOSC3/RRP40, EXOSC5/RRP46, HNRNPD, HNRNPR and SYNCRIP. Identified in a complex with AANAT mRNA, but does not bind mRNA by itself. As to expression, detected in some neurons in the brain cortex. Detected in small arteries, dendritic cells and macrophages in the thymus. Detected in lung bronchi, in bronchial epithelial cells and in bronchial smooth muscle cells. Detected in smooth muscle cells in a broad range of organs (at protein level). Expressed in brain, thymus, lung, and kidney.

It localises to the cytoplasm. Functionally, promotes degradation of target mRNA species. Plays a role in the regulation of circadian mRNA stability. Binds GTP and has GTPase activity. The chain is GTP-binding protein 1 (Gtpbp1) from Mus musculus (Mouse).